The chain runs to 868 residues: DNA mismatch repair protein MutS (868 aa).

Position 620 to 627 (620 to 627 (GPNMGGKS)) interacts with ATP.

This sequence belongs to the DNA mismatch repair MutS family.

In terms of biological role, this protein is involved in the repair of mismatches in DNA. It is possible that it carries out the mismatch recognition step. This protein has a weak ATPase activity. The polypeptide is DNA mismatch repair protein MutS (Xylella fastidiosa (strain Temecula1 / ATCC 700964)).